The following is a 414-amino-acid chain: uncharacterized protein (414 aa).

At 1–66 (MNPSVPKVMK…LQRISKDYLK (66 aa)) the chain is on the lumenal side. The interval 20 to 51 (SKEMNDTSLQLPSTTRSLSPKESNSNEDFNVD) is disordered. A compositionally biased stretch (polar residues) spans 25–51 (DTSLQLPSTTRSLSPKESNSNEDFNVD). Lysine 40 is covalently cross-linked (Glycyl lysine isopeptide (Lys-Gly) (interchain with G-Cter in ubiquitin)). Residues 67–87 (PNIGLVLLTVSYFFNSAMVVS) form a helical membrane-spanning segment. One can recognise an EamA 1 domain in the interval 78–215 (YFFNSAMVVS…SLLGVVLIVR (138 aa)). Topologically, residues 88–106 (TKVLENDPDDIANDRQIKP) are cytoplasmic. The helical transmembrane segment at 107–127 (LQILLVRMVITYIGTLIYMYI) threads the bilayer. Topologically, residues 128–144 (NKSTISDVPFGKPEVRK) are lumenal. The chain crosses the membrane as a helical span at residues 145 to 167 (WLVLRGCTGFFGVFGMYYSLMYL). The Cytoplasmic segment spans residues 168 to 171 (TISD). The chain crosses the membrane as a helical span at residues 172-191 (AVLITFLAPSLTIFLSWVIL). Over 192-199 (RERFTKVE) the chain is Lumenal. A helical membrane pass occupies residues 200–220 (ALGSLISLLGVVLIVRPSFLF). At 221–241 (GTPELTDSSSQIVESSDPKSR) the chain is on the cytoplasmic side. Residues 242–262 (LIATLVGLWGVLGMSCVYIII) traverse the membrane as a helical segment. The region spanning 253 to 379 (LGMSCVYIII…IISATLWVIR (127 aa)) is the EamA 2 domain. Over 263-269 (RYIGKRA) the chain is Lumenal. Residues 270–290 (HAIMSVSYFSLITAIVSFIGI) traverse the membrane as a helical segment. The Cytoplasmic portion of the chain corresponds to 291 to 307 (NTIPSMKFQIPHSKKQW). A helical transmembrane segment spans residues 308-328 (ILFGNLGVSGFIFQLLLTMGI). At 329–357 (QRERAGRGSLMTYTQLLYAVFWDVALYKH) the chain is on the lumenal side. Residues 358–378 (WPNIWSWIGMIIIISATLWVI) form a helical membrane-spanning segment. Residues 379-414 (RIRAANNETTAKDLTPIIDDEENSIPLTEFDLSDSK) are Cytoplasmic-facing.

It to yeast YPL264c.

The protein localises to the membrane. This is an uncharacterized protein from Saccharomyces cerevisiae (strain ATCC 204508 / S288c) (Baker's yeast).